We begin with the raw amino-acid sequence, 451 residues long: Scaffold protein ILK (451 aa).

Met-1 is modified (N-acetylmethionine). ANK repeat units lie at residues 2–30 (DDIF…LNQG), 31–63 (DDHG…INVM), 64–96 (NRGD…INAV), 97–129 (NEHG…VSIC), and 130–174 (NKYG…GTTR). The segment at 33–139 (HGFSPLHWAC…NKYGEMPMDK (107 aa)) is interaction with LIMS1. At Thr-173 the chain carries Phosphothreonine. The PH-like; mediates interaction with TGFB1I1 stretch occupies residues 180–212 (GTLNKHSGIDFKQLNFLAKLNENHSGELWKGRW). Position 186 is a phosphoserine (Ser-186). The 253-residue stretch at 193–445 (LNFLAKLNEN…PKFDMIVPIL (253 aa)) folds into the Protein kinase domain. 4 residues coordinate ATP: Asn-200, Asn-202, His-203, and Ser-204. Position 246 is a phosphoserine (Ser-246). His-270, Met-272, and Asn-279 together coordinate ATP. Asp-339 is a Mg(2+) binding site. Lys-341 serves as a coordination point for ATP. Positions 363–371 (KKPEDTNRR) match the Nuclear localization signal motif. The residue at position 425 (Lys-425) is an N6-acetyllysine.

It belongs to the protein kinase superfamily. TKL Ser/Thr protein kinase family. In terms of assembly, component of the heterotrimeric IPP (ILK-PINCH-PARVIN) complex composed of ILK, LIMS1/PINCH and PARVA; the complex binds to F-actin via the C-terminal tail of LIMS1 and the N-terminal region of PARVA, promoting F-actin filament bundling. Formation of the IPP complex is dependent on protein kinase C and precedes integrin-mediated cell adhesion and spreading. ILK also interacts with LIMS2/PINCH2 and with PARVB and PARVG which may substitute for LIMS1 and PARVA in the IPP complex; PARVA and PARVB compete for the same binding site. Interaction with PARVG promotes the establishment of cell polarity required for leukocyte migration. Interacts with the cytoplasmic domain of integrin ITGB1 and may also interact with integrins ITGB2, ITGB3 and/or ITGB5. Interacts probably also with TGFB1I1. Interacts (via ANK repeats) with EPHA1 (via SAM domain); stimulated by EFNA1 but independent of the kinase activity of EPHA1. Interacts with FERMT2. Interacts with LIMD2; leading to activate the protein kinase activity. Interacts with PXN/PAXILLIN (via LD motif 4). Interacts with CCDC25 (via cytoplasmic region); initiating the ILK-PARVB cascade to induce cytoskeleton rearrangement and directional migration of cells. Interacts with IQGAP1; the interaction is required for localization of IQGAP1 to the cell cortex. Post-translationally, phosphorylation by PAK1 modulates ILK subcellular location by promoting its nuclear export.

Its subcellular location is the cell junction. It localises to the focal adhesion. The protein localises to the cell membrane. It is found in the cell projection. The protein resides in the lamellipodium. Its subcellular location is the cytoplasm. It localises to the myofibril. The protein localises to the sarcomere. It is found in the nucleus. The protein resides in the cytoskeleton. Its subcellular location is the microtubule organizing center. It localises to the centrosome. The protein localises to the cell cortex. Its function is as follows. Scaffold protein which mediates protein-protein interactions during a range of cellular events including focal adhesion assembly, cell adhesion and cell migration. Regulates integrin-mediated signal transduction by contributing to inside-out integrin activation. Recruits PARVA and LIMS1/PITCH to form the heterotrimeric IPP (ILK-PINCH-PARVIN) complex which binds to F-actin via the C-terminal tail of LIMS1 and the N-terminal region of PARVA, promoting F-actin filament bundling, a process required to generate force for actin cytoskeleton reorganization and subsequent dynamic cell adhesion events such as cell spreading and migration. Binding to PARVA promotes effective assembly of ILK into focal adhesions while PARVA-bound ILK can simultaneously engage integrin-beta cytoplasmic tails to mediate cell adhesion. Plays a role with PARVG in promoting the cell adhesion and spreading of leukocytes. Acts as an upstream effector of both AKT1/PKB and GSK3. Mediates trafficking of caveolae to the cell surface in an ITGB1-dependent manner by promoting the recruitment of IQGAP1 to the cell cortex which cooperates with its effector DIAPH1 to locally stabilize microtubules and allow stable insertion of caveolae into the plasma membrane. Required for the maintenance of mitotic spindle integrity by promoting phosphorylation of TACC3 by AURKA. Associates with chromatin and may act as a negative regulator of transcription when located in the nucleus. In Cavia porcellus (Guinea pig), this protein is Scaffold protein ILK.